Here is a 121-residue protein sequence, read N- to C-terminus: Large ribosomal subunit protein uL14c (121 aa).

Belongs to the universal ribosomal protein uL14 family. In terms of assembly, part of the 50S ribosomal subunit.

The protein localises to the plastid. It localises to the apicoplast. Functionally, binds to 23S rRNA. The protein is Large ribosomal subunit protein uL14c (rpl14) of Eimeria tenella (Coccidian parasite).